We begin with the raw amino-acid sequence, 378 residues long: Chaperone protein DnaJ (378 aa).

The 66-residue stretch at 5–70 (DYYEVLSVGR…DKKAAYDQFG (66 aa)) folds into the J domain. Residues 133–211 (GLTKELRIPT…CHGEGRVEKS (79 aa)) form a CR-type zinc finger. The Zn(2+) site is built by Cys-146, Cys-149, Cys-163, Cys-166, Cys-185, Cys-188, Cys-199, and Cys-202. 4 CXXCXGXG motif repeats span residues 146 to 153 (CDTCDGSG), 163 to 170 (CGTCHGQG), 185 to 192 (CPTCHGRG), and 199 to 206 (CNSCHGEG).

The protein belongs to the DnaJ family. As to quaternary structure, homodimer. The cofactor is Zn(2+).

The protein localises to the cytoplasm. Functionally, participates actively in the response to hyperosmotic and heat shock by preventing the aggregation of stress-denatured proteins and by disaggregating proteins, also in an autonomous, DnaK-independent fashion. Unfolded proteins bind initially to DnaJ; upon interaction with the DnaJ-bound protein, DnaK hydrolyzes its bound ATP, resulting in the formation of a stable complex. GrpE releases ADP from DnaK; ATP binding to DnaK triggers the release of the substrate protein, thus completing the reaction cycle. Several rounds of ATP-dependent interactions between DnaJ, DnaK and GrpE are required for fully efficient folding. Also involved, together with DnaK and GrpE, in the DNA replication of plasmids through activation of initiation proteins. The sequence is that of Chaperone protein DnaJ from Shewanella woodyi (strain ATCC 51908 / MS32).